The chain runs to 87 residues: Toxin CsEv2 (87 aa).

Positions 1–19 are cleaved as a signal peptide; the sequence is MNSLLIITACLFLIGTVWA. One can recognise an LCN-type CS-alpha/beta domain in the interval 20-85; it reads KEGYLVNKST…TYPLPNKSCS (66 aa). Intrachain disulfides connect cysteine 31/cysteine 84, cysteine 35/cysteine 60, cysteine 44/cysteine 65, and cysteine 48/cysteine 67.

This sequence belongs to the long (4 C-C) scorpion toxin superfamily. Sodium channel inhibitor family. Beta subfamily. Expressed by the venom gland.

The protein localises to the secreted. Beta toxins bind voltage-independently at site-4 of sodium channels (Nav) and shift the voltage of activation toward more negative potentials thereby affecting sodium channel activation and promoting spontaneous and repetitive firing. Induces immediate paralysis in crickets after injection, with a total paralysis occurring within 15-30 minutes and lasting for 1-2 hours. Is also lethal to vertebrate (chicks) when injected in very high dosages (more that 100 mg/kg). The polypeptide is Toxin CsEv2 (Centruroides sculpturatus (Arizona bark scorpion)).